A 160-amino-acid chain; its full sequence is Putative pre-16S rRNA nuclease (160 aa).

The protein belongs to the YqgF nuclease family.

It is found in the cytoplasm. Its function is as follows. Could be a nuclease involved in processing of the 5'-end of pre-16S rRNA. In Chelativorans sp. (strain BNC1), this protein is Putative pre-16S rRNA nuclease.